Here is a 1439-residue protein sequence, read N- to C-terminus: Fanconi anemia group D2 protein (1439 aa).

Lys-563 is covalently cross-linked (Glycyl lysine isopeptide (Lys-Gly) (interchain with G-Cter in ubiquitin)).

This sequence belongs to the Fanconi anemia protein FANCD2 family. In terms of assembly, homodimer; cannot be ubiquitinated and does not bind DNA. Part of a FANCI-FANCD2 heterodimeric complex that binds and scans dsDNA for DNA damage. Interacts directly with FANCE and FANCI. Interacts with USP1 and MEN1. The ubiquitinated form specifically interacts with BRCA1 and BLM. Both the nonubiquitinated and the monoubiquitinated forms interact with BRCA2; this interaction is mediated by phosphorylated FANCG and the complex also includes XCCR3. The ubiquitinated form specifically interacts with MTMR15/FAN1 (via UBZ-type zinc finger), leading to recruit MTMR15/FAN1 to sites of DNA damage. Interacts with DCLRE1B/Apollo. Interacts with POLN. Interacts with UHRF1 and UHRF2; these interactions promote FANCD2 activation. In terms of processing, monoubiquitinated on Lys-563 during S phase and upon genotoxic stress. Deubiquitinated by USP1 as cells enter G2/M, or once DNA repair is completed. Monoubiquitination prevents DNA release from the FANCI-FANCD2 complex. FANCD2 is only ubiquitinated in the FANCI-FANCD2 complex and the monoubiquitination of FANCD2 is promoted by phosphorylation of FANCI. Post-translationally, phosphorylated in response to various genotoxic stresses by ATM and/or ATR.

The protein localises to the nucleus. Required for maintenance of chromosomal stability. Promotes accurate and efficient pairing of homologs during meiosis. Involved in the repair of DNA double-strand breaks, both by homologous recombination and single-strand annealing. The FANCI-FANCD2 complex binds and scans double-stranded DNA (dsDNA) for DNA damage; this complex stalls at DNA junctions between double-stranded DNA and single-stranded DNA. May participate in S phase and G2 phase checkpoint activation upon DNA damage. Plays a role in preventing breakage and loss of missegregating chromatin at the end of cell division, particularly after replication stress. Required for the targeting, or stabilization, of BLM to non-centromeric abnormal structures induced by replicative stress. Promotes BRCA2/FANCD1 loading onto damaged chromatin. May also be involved in B-cell immunoglobulin isotype switching. The polypeptide is Fanconi anemia group D2 protein (Gallus gallus (Chicken)).